Consider the following 232-residue polypeptide: UPF0758 protein EF_2926 (232 aa).

Residues 107 to 229 (KVTSSQQVAQ…YISLREENFF (123 aa)) form the MPN domain. 3 residues coordinate Zn(2+): His-178, His-180, and Asp-191. Positions 178-191 (HNHPSGNPTPSPQD) match the JAMM motif motif.

This sequence belongs to the UPF0758 family.

The chain is UPF0758 protein EF_2926 from Enterococcus faecalis (strain ATCC 700802 / V583).